Here is a 753-residue protein sequence, read N- to C-terminus: 5-methyltetrahydropteroyltriglutamate--homocysteine methyltransferase (753 aa).

5-methyltetrahydropteroyltri-L-glutamate is bound by residues 17-20 (RELK) and K117. L-homocysteine is bound by residues 431–433 (IGS) and E484. Residues 431 to 433 (IGS) and E484 each bind L-methionine. 5-methyltetrahydropteroyltri-L-glutamate contacts are provided by residues 515–516 (RC) and W561. Residue D599 coordinates L-homocysteine. D599 contacts L-methionine. Residue E605 coordinates 5-methyltetrahydropteroyltri-L-glutamate. Residues H641, C643, and E665 each contribute to the Zn(2+) site. H694 serves as the catalytic Proton donor. A Zn(2+)-binding site is contributed by C726.

This sequence belongs to the vitamin-B12 independent methionine synthase family. Zn(2+) is required as a cofactor.

It catalyses the reaction 5-methyltetrahydropteroyltri-L-glutamate + L-homocysteine = tetrahydropteroyltri-L-glutamate + L-methionine. It functions in the pathway amino-acid biosynthesis; L-methionine biosynthesis via de novo pathway; L-methionine from L-homocysteine (MetE route): step 1/1. Catalyzes the transfer of a methyl group from 5-methyltetrahydrofolate to homocysteine resulting in methionine formation. The sequence is that of 5-methyltetrahydropteroyltriglutamate--homocysteine methyltransferase from Escherichia coli O139:H28 (strain E24377A / ETEC).